Here is a 398-residue protein sequence, read N- to C-terminus: Enolase (398 aa).

Glutamine 154 is a (2R)-2-phosphoglycerate binding site. Glutamate 196 functions as the Proton donor in the catalytic mechanism. Residues aspartate 232, glutamate 273, and aspartate 300 each coordinate Mg(2+). Residues lysine 325, arginine 354, serine 355, and lysine 376 each contribute to the (2R)-2-phosphoglycerate site. Lysine 325 (proton acceptor) is an active-site residue.

The protein belongs to the enolase family. Requires Mg(2+) as cofactor.

Its subcellular location is the cytoplasm. It is found in the secreted. It localises to the cell surface. It catalyses the reaction (2R)-2-phosphoglycerate = phosphoenolpyruvate + H2O. It participates in carbohydrate degradation; glycolysis; pyruvate from D-glyceraldehyde 3-phosphate: step 4/5. Its function is as follows. Catalyzes the reversible conversion of 2-phosphoglycerate (2-PG) into phosphoenolpyruvate (PEP). It is essential for the degradation of carbohydrates via glycolysis. This chain is Enolase, found in Natronomonas pharaonis (strain ATCC 35678 / DSM 2160 / CIP 103997 / JCM 8858 / NBRC 14720 / NCIMB 2260 / Gabara) (Halobacterium pharaonis).